The sequence spans 87 residues: UPF0175 protein AF_0597 (87 aa).

Belongs to the UPF0175 family.

The polypeptide is UPF0175 protein AF_0597 (Archaeoglobus fulgidus (strain ATCC 49558 / DSM 4304 / JCM 9628 / NBRC 100126 / VC-16)).